The sequence spans 176 residues: Orotate phosphoribosyltransferase (176 aa).

Residues arginine 90, lysine 91, lysine 94, and glutamate 116–serine 124 each bind 5-phospho-alpha-D-ribose 1-diphosphate. Residues threonine 120 and arginine 148 each coordinate orotate.

Belongs to the purine/pyrimidine phosphoribosyltransferase family. PyrE subfamily. In terms of assembly, homodimer. Requires Mg(2+) as cofactor.

It catalyses the reaction orotidine 5'-phosphate + diphosphate = orotate + 5-phospho-alpha-D-ribose 1-diphosphate. It functions in the pathway pyrimidine metabolism; UMP biosynthesis via de novo pathway; UMP from orotate: step 1/2. Catalyzes the transfer of a ribosyl phosphate group from 5-phosphoribose 1-diphosphate to orotate, leading to the formation of orotidine monophosphate (OMP). This chain is Orotate phosphoribosyltransferase, found in Methanocaldococcus jannaschii (strain ATCC 43067 / DSM 2661 / JAL-1 / JCM 10045 / NBRC 100440) (Methanococcus jannaschii).